The following is a 471-amino-acid chain: MTMAANLLEDWCRGMEADIHRSLLVTGIPEDCGQAEIEETLNGVLSPLGPYSVLNKIFLRQENAKAALVEVGEGVNLRAIPREFPGRGGIWRVVCRDPTQDAEFLKNLNEFLDAEERTLEDVVHLLELSRASPPKTQNRSTENWAEALGVLLGAVVQIIYYMDAEMLSQEEARAQDLAKAQAVASLASAAGRKVKKEPGRAAERGSALKMENPDGWNDVADGGDGPKPLVRKAGALTHSRRKRQKKTPKQEPVPWKKSQGSHSHSSASLKHPEADDGKNRERLEHVRNNKKPCVKQEGSALKKAPVKCAWKFPSNLPHVAASRGVASESDQDGGLEGPPKKKAMGWVSAKSPAYMRKKKVSLGPVSYVLVNSEDPRKKPGVSKKGPGSGQDAPDQKAPGVPQAHESPTSASQGPEAKPQSPLHASSGENDGRSHLGCVNKWMEGEEQQGKAGAQEPKWAESQMVGEDPSAV.

Disordered stretches follow at residues Ser-188 to Ala-300 and Ala-321 to Val-471. Residues His-238–Thr-247 show a composition bias toward basic residues. Positions Lys-256–Leu-269 are enriched in low complexity. Residues Lys-270–Arg-287 show a composition bias toward basic and acidic residues.

This sequence belongs to the PNMA family.

This Bos taurus (Bovine) protein is Paraneoplastic antigen-like protein 8A (PNMA8A).